We begin with the raw amino-acid sequence, 521 residues long: Interleukin-9 receptor (521 aa).

Positions 1–40 (MGLGRCIWEGWTLESEALRRDMGTWLLACICICTCVCLGV) are cleaved as a signal peptide. At 41–270 (SVTGEGQGPR…GPLIPPWGWP (230 aa)) the chain is on the extracellular side. Residues asparagine 117 and asparagine 156 are each glycosylated (N-linked (GlcNAc...) asparagine). The 111-residue stretch at 149–259 (PPSDLQSNIS…QPVCFQAPQR (111 aa)) folds into the Fibronectin type-III domain. The short motif at 245–249 (WSEWS) is the WSXWS motif element. Residues 271-291 (GNTLVAVSIFLLLTGPTYLLF) traverse the membrane as a helical segment. At 292–521 (KLSPRVKRIF…VLSKARSWTF (230 aa)) the chain is on the cytoplasmic side. The Box 1 motif signature appears at 301 to 309 (FYQNVPSPA). A disordered region spans residues 413–439 (WAPTSLTRPAPPDSEGSRSSSSSSSSN). Over residues 429 to 439 (SRSSSSSSSSN) the composition is skewed to low complexity.

It belongs to the type I cytokine receptor family. Type 4 subfamily. Interacts with IL9.

Its subcellular location is the cell membrane. The protein localises to the secreted. Its function is as follows. Plays an important role in the immune response against parasites by acting as a receptor of IL9. In Homo sapiens (Human), this protein is Interleukin-9 receptor (IL9R).